Consider the following 150-residue polypeptide: FAD synthase (150 aa).

Residues 11-12 (TF), 16-19 (HPGH), Asp-96, and Tyr-124 each bind ATP.

The protein belongs to the archaeal FAD synthase family. Homodimer. A divalent metal cation is required as a cofactor.

The catalysed reaction is FMN + ATP + H(+) = FAD + diphosphate. It functions in the pathway cofactor biosynthesis; FAD biosynthesis; FAD from FMN: step 1/1. Functionally, catalyzes the transfer of the AMP portion of ATP to flavin mononucleotide (FMN) to produce flavin adenine dinucleotide (FAD) coenzyme. The polypeptide is FAD synthase (Methanocaldococcus fervens (strain DSM 4213 / JCM 15782 / AG86) (Methanococcus fervens)).